A 374-amino-acid chain; its full sequence is Amino acid binding protein (374 aa).

The signal sequence occupies residues Met-1–Ala-27.

The protein belongs to the leucine-binding protein family.

It is found in the periplasm. Binds primarily proteinogenic amino acids. This is Amino acid binding protein from Pseudomonas aeruginosa (strain ATCC 15692 / DSM 22644 / CIP 104116 / JCM 14847 / LMG 12228 / 1C / PRS 101 / PAO1).